Reading from the N-terminus, the 279-residue chain is Undecaprenyl-diphosphatase (279 aa).

The next 8 helical transmembrane spans lie at 2 to 22 (LIIELLKAIFFGIIEGITEWL), 44 to 64 (AFIEMFNIVIQLGAIIAVMLI), 85 to 105 (WQLWLKVVIACIPSILIAVPL), 113 to 133 (FYFMVPIAIALIVYGIAFIWI), 163 to 183 (VLSIVPGTSRSGATILGAIIL), 188 to 208 (TVAADFTFFLAIPTMFGYSGL), 223 to 243 (AQVLILLVASLTAFVVSLLAI), and 255 to 275 (FTIFGKYRIVLGSLLLIYSFF).

Belongs to the UppP family.

It localises to the cell membrane. The enzyme catalyses di-trans,octa-cis-undecaprenyl diphosphate + H2O = di-trans,octa-cis-undecaprenyl phosphate + phosphate + H(+). Functionally, catalyzes the dephosphorylation of undecaprenyl diphosphate (UPP). Confers resistance to bacitracin. This is Undecaprenyl-diphosphatase from Streptococcus pyogenes serotype M2 (strain MGAS10270).